The sequence spans 252 residues: 5-oxoprolinase subunit A (252 aa).

Belongs to the LamB/PxpA family. Forms a complex composed of PxpA, PxpB and PxpC.

It carries out the reaction 5-oxo-L-proline + ATP + 2 H2O = L-glutamate + ADP + phosphate + H(+). Functionally, catalyzes the cleavage of 5-oxoproline to form L-glutamate coupled to the hydrolysis of ATP to ADP and inorganic phosphate. This chain is 5-oxoprolinase subunit A, found in Photorhabdus laumondii subsp. laumondii (strain DSM 15139 / CIP 105565 / TT01) (Photorhabdus luminescens subsp. laumondii).